The chain runs to 438 residues: MTTVLPPLEDTDGLWAALTEAAASVEKLLATLPEHGARSSAERAEIAAAHDAARALRVRFLDTHADAVYDRLTDHRRVHLRLAELVEAAATAFPGLVPTQQQLAVERSLPQAAKEGHEIDQGIFLRAVLRSPLAGPHLLDAMLRPTPRALELLPEFVRTGEVEMEAVHLERRDGVARLTMCRDDRLNAEDGQQVDDMETAVDLALLDPGVRVGLLRGGVMSHPRYRGKRVFSAGINLKYLSQGGISLVDFLMRRELGYIHKLVRGVLTNDDRPGWWHSPRIEKPWVAAVDGFAIGGGAQLLLVFDRVLASSDAYFSLPAAKEGIIPGAANLRLGRFAGPRVSRQVILEGRRIWAKEPEARLLVDEVVEPDELDAAIERSLTRLDGDAVLANRRMLNLADESPDGFRAYMAEFALMQALRLYGHDVIDKVGRFGGRPPA.

Residues D183, E189, 222–225 (HPRY), 233–238 (AGINLK), G296, 325–327 (IPG), and Q416 contribute to the substrate site.

Belongs to the enoyl-CoA hydratase/isomerase family. As to quaternary structure, homohexamer; dimer of trimers.

The catalysed reaction is (3,5-dihydroxyphenyl)acetyl-CoA + O2 = 2-(3,5-dihydroxyphenyl)-2-oxoacetate + CoA + H(+). Inhibited by DPA-S-(N-acetylcysteamine). In terms of biological role, involved in the biosynthesis of the nonproteinogenic amino acid monomer (S)-3,5-dihydroxyphenylglycine (Dpg) responsible of the production of vancomycin and teicoplanin antibiotics. Catalyzes the unusual conversion 3,5-dihydroxyphenylacetyl-CoA (DPA-CoA) to 3,5-dihydroxyphenylglyoxylate. DpgC performed a net four-electron oxidation of the benzylic carbon of DPA-CoA and the hydrolysis of the thioester bond to generate free CoA. DpgC has the ability to process a diverse range of substituted phenylacetyl-CoA substrates. In Streptomyces toyocaensis, this protein is (3,5-dihydroxyphenyl)acetyl-CoA 1,2-dioxygenase.